Consider the following 292-residue polypeptide: Ribosomal protein L11 methyltransferase (292 aa).

Thr144, Gly165, Asp187, and Asn229 together coordinate S-adenosyl-L-methionine.

Belongs to the methyltransferase superfamily. PrmA family.

Its subcellular location is the cytoplasm. The enzyme catalyses L-lysyl-[protein] + 3 S-adenosyl-L-methionine = N(6),N(6),N(6)-trimethyl-L-lysyl-[protein] + 3 S-adenosyl-L-homocysteine + 3 H(+). Its function is as follows. Methylates ribosomal protein L11. In Pseudomonas fluorescens (strain ATCC BAA-477 / NRRL B-23932 / Pf-5), this protein is Ribosomal protein L11 methyltransferase.